We begin with the raw amino-acid sequence, 148 residues long: Large ribosomal subunit protein bL9 (148 aa).

This sequence belongs to the bacterial ribosomal protein bL9 family.

Functionally, binds to the 23S rRNA. The sequence is that of Large ribosomal subunit protein bL9 from Hahella chejuensis (strain KCTC 2396).